A 448-amino-acid polypeptide reads, in one-letter code: C4-dicarboxylate transport protein (448 aa).

9 helical membrane passes run 13 to 33, 49 to 69, 81 to 101, 149 to 169, 193 to 213, 227 to 247, 294 to 314, 336 to 356, and 357 to 377; these read SLYA…HFYP, LIKM…IAGM, LALL…LLVV, AFAK…GFAL, IVGI…AFTI, LMGA…GIVS, VVGL…SIYL, TLLA…GSGF, and IVLA…LALI.

It belongs to the dicarboxylate/amino acid:cation symporter (DAACS) (TC 2.A.23) family.

It localises to the cell inner membrane. Functionally, responsible for the transport of dicarboxylates such as succinate, fumarate, and malate from the periplasm across the membrane. This chain is C4-dicarboxylate transport protein, found in Albidiferax ferrireducens (strain ATCC BAA-621 / DSM 15236 / T118) (Rhodoferax ferrireducens).